Reading from the N-terminus, the 1252-residue chain is DNA-directed RNA polymerase subunit beta (1252 aa).

This sequence belongs to the RNA polymerase beta chain family. In terms of assembly, the RNAP catalytic core consists of 2 alpha, 1 beta, 1 beta' and 1 omega subunit. When a sigma factor is associated with the core the holoenzyme is formed, which can initiate transcription.

It catalyses the reaction RNA(n) + a ribonucleoside 5'-triphosphate = RNA(n+1) + diphosphate. In terms of biological role, DNA-dependent RNA polymerase catalyzes the transcription of DNA into RNA using the four ribonucleoside triphosphates as substrates. This is DNA-directed RNA polymerase subunit beta from Chlamydia felis (strain Fe/C-56) (Chlamydophila felis).